The sequence spans 76 residues: Exodeoxyribonuclease 7 small subunit (76 aa).

This sequence belongs to the XseB family. In terms of assembly, heterooligomer composed of large and small subunits.

Its subcellular location is the cytoplasm. It catalyses the reaction Exonucleolytic cleavage in either 5'- to 3'- or 3'- to 5'-direction to yield nucleoside 5'-phosphates.. In terms of biological role, bidirectionally degrades single-stranded DNA into large acid-insoluble oligonucleotides, which are then degraded further into small acid-soluble oligonucleotides. The protein is Exodeoxyribonuclease 7 small subunit of Legionella pneumophila (strain Paris).